A 338-amino-acid chain; its full sequence is Taste receptor type 2 member 39 (338 aa).

Residues 1-30 (MLGRCFPPNTKEKQQLRMIKLCDPAESELS) lie on the Extracellular side of the membrane. The chain crosses the membrane as a helical span at residues 31 to 51 (PFLITLTLAVLLAEYLTGIIA). Over 52–74 (NGFITAIHAAECVQNKSVSTSGR) the chain is Cytoplasmic. A helical membrane pass occupies residues 75–95 (ILVFLSVSRIALQSLMMLEIT). Residues 96-116 (ISSTSLSFYSEDTVYYAFKIS) are Extracellular-facing. Residues 117 to 137 (FIFLNFCSLWFAAWLSFFYFV) form a helical membrane-spanning segment. The Cytoplasmic segment spans residues 138–156 (KIANFSYPLFLKLRWRISG). Residues 157-177 (LIPWLLWLSVFISFSHSMFCI) form a helical membrane-spanning segment. Over 178-205 (NICTGYCDNSFPIHSSNSTEKTYFSEIS) the chain is Extracellular. Asn-194 is a glycosylation site (N-linked (GlcNAc...) asparagine). The helical transmembrane segment at 206 to 226 (VVSLAFFFNLGIVIPLIMFIL) threads the bilayer. Residues 227-262 (AAILLILSLKRHTLYMXSNATGSKDPSMEAHIGAIK) are Cytoplasmic-facing. Residues 263–283 (ATSYFLILYIFNAVALFIYLS) traverse the membrane as a helical segment. At 284–291 (NMFDINSL) the chain is on the extracellular side. The chain crosses the membrane as a helical span at residues 292-312 (WNTLCQIIMAAYPASHSILLI). Residues 313–338 (KDNPGLRRAWKQLQHRLHLYPKEWTL) are Cytoplasmic-facing.

It belongs to the G-protein coupled receptor T2R family.

It localises to the membrane. Receptor that may play a role in the perception of bitterness and is gustducin-linked. May play a role in sensing the chemical composition of the gastrointestinal content. The activity of this receptor may stimulate alpha gustducin, mediate PLC-beta-2 activation and lead to the gating of TRPM5. In Papio hamadryas (Hamadryas baboon), this protein is Taste receptor type 2 member 39 (TAS2R39).